Reading from the N-terminus, the 304-residue chain is Glycine--tRNA ligase alpha subunit (304 aa).

It belongs to the class-II aminoacyl-tRNA synthetase family. Tetramer of two alpha and two beta subunits.

It is found in the cytoplasm. The enzyme catalyses tRNA(Gly) + glycine + ATP = glycyl-tRNA(Gly) + AMP + diphosphate. The chain is Glycine--tRNA ligase alpha subunit from Actinobacillus pleuropneumoniae serotype 3 (strain JL03).